The following is a 123-amino-acid chain: Putative acidic leucine-rich nuclear phosphoprotein 32 family member C (123 aa).

4 LRR repeats span residues 43–64, 65–87, 89–110, and 114–123; these read ELEF…PKLN, KLKK…AEKC, NLKH…ELLK, and NLKSLDLFNC.

Belongs to the ANP32 family.

The sequence is that of Putative acidic leucine-rich nuclear phosphoprotein 32 family member C (Anp32c) from Mus musculus (Mouse).